Reading from the N-terminus, the 78-residue chain is Small ribosomal subunit protein bS18 (78 aa).

Belongs to the bacterial ribosomal protein bS18 family. As to quaternary structure, part of the 30S ribosomal subunit. Forms a tight heterodimer with protein bS6.

Binds as a heterodimer with protein bS6 to the central domain of the 16S rRNA, where it helps stabilize the platform of the 30S subunit. This Thermobifida fusca (strain YX) protein is Small ribosomal subunit protein bS18.